A 3680-amino-acid chain; its full sequence is Dystrophin (3680 aa).

The interval 1–237 (MLWWEEVEDC…ILMYITSLFQ (237 aa)) is actin-binding. 2 consecutive Calponin-homology (CH) domains span residues 15-119 (DVQK…LHWQ) and 134-240 (TNSE…QVLP). The tract at residues 63-72 (PKEKGSTRVH) is ANK2- and ANK-3 binding. Positions 310 to 323 (TSDPTRSPLPSQHL) are enriched in polar residues. The interval 310–332 (TSDPTRSPLPSQHLETPEDKSFG) is disordered. 24 Spectrin repeats span residues 340-448 (ANLD…NLHK), 449-557 (VLMD…LLQD), 560-668 (LKWQ…QISQ), 720-829 (EIRK…WLEY), 831-935 (NNII…ELQT), 944-1047 (RYQE…KLEE), 1050-1156 (AKLR…ALKG), 1159-1265 (DKTV…TLEE), 1268-1369 (ACWH…LLEQ), 1370-1465 (SIQS…LFQK), 1470-1570 (EQRL…QLEK), 1573-1678 (KLSR…LLLE), 1681-1780 (KHME…KASI), 1781-1876 (PLKE…KALE), 1879-1981 (HQWY…TVHE), 1994-2103 (EISY…RFDR), 2106-2210 (EKWR…RLEE), 2213-2320 (NILS…EIEA), 2321-2418 (HVKD…LRAK), 2470-2572 (FNRA…QLTE), 2575-2681 (KDST…ALEE), 2684-2797 (RLLQ…HLEA), 2803-2925 (KRLH…RKID), and 2930-3035 (RLQE…QLHE). Residues 1418 to 1915 (DLTSHEISLE…PEPRDERKIK (498 aa)) form an interaction with SYNM region. In terms of domain architecture, WW spans 3050–3083 (TSVQGPWERAISPNKVPYYINHETQTTCWDHPKM). Residues 3053 to 3403 (QGPWERAISP…TVLEGDNMET (351 aa)) are interaction with SYNM. The ZZ-type; degenerate zinc finger occupies 3303–3359 (KHQAKCNICKECPIIGFRYRSLKHFNYDICQSCFFSGRVAKGHKMHYPMVEYCTPTT). Residues Cys3308, Cys3311, Cys3332, and Cys3335 each contribute to the Zn(2+) site. Positions 3461-3513 (DDEHLLIQHYWRSLNQESPLSQPRSPAQILISLESEERGELERILADLEGRNR) are binds to SNTB1. Ser3478, Ser3485, and Ser3495 each carry phosphoserine. 2 disordered regions span residues 3524-3549 (QQHE…QSPR) and 3595-3680 (PQAE…EDTM). 2 stretches are compositionally biased toward polar residues: residues 3602–3621 (NGTT…SSQP) and 3658–3668 (LNHSFPSSRGR). Phosphoserine occurs at positions 3607, 3608, 3612, 3618, 3619, and 3661.

In terms of assembly, interacts with SYNM. Interacts with the syntrophins SNTG1 and SNTG2. Interacts with KRT19. Component of the dystrophin-associated glycoprotein complex which is composed of three subcomplexes: a cytoplasmic complex comprised of DMD (or UTRN), DTNA and a number of syntrophins, such as SNTB1, SNTB2, SNTG1 and SNTG2, the transmembrane dystroglycan complex, and the sarcoglycan-sarcospan complex. Interacts with DAG1 (betaDAG1) with DMD; the interaction is inhibited by phosphorylation on the PPXY motif of DAG1. Interacts with SYNM; SNTA1 and SNTB1. Interacts with CMYA5. Directly interacts with ANK2 and ANK3; these interactions do not interfere with betaDAG1-binding and are necessary for proper localization in muscle cells. Identified in a dystroglycan complex that contains at least PRX, DRP2, UTRN, DMD and DAG1. Interacts with DTNB. Interacts with PGM5; the interaction is direct. Interacts with NOS1; localizes NOS1 to sarcolemma in muscle cells.

It localises to the cell membrane. The protein resides in the sarcolemma. Its subcellular location is the cytoplasm. The protein localises to the cytoskeleton. It is found in the postsynaptic cell membrane. Anchors the extracellular matrix to the cytoskeleton via F-actin. Ligand for dystroglycan. Component of the dystrophin-associated glycoprotein complex which accumulates at the neuromuscular junction (NMJ) and at a variety of synapses in the peripheral and central nervous systems and has a structural function in stabilizing the sarcolemma. Also implicated in signaling events and synaptic transmission. The protein is Dystrophin (DMD) of Canis lupus familiaris (Dog).